An 860-amino-acid polypeptide reads, in one-letter code: MQEQYRPEEIESKVQLHWDEKRTFEVTEDESKEKYYCLSMLPYPSGRLHMGHVRNYTIGDVIARYQRMLGKNVLQPIGWDAFGLPAEGAAVKNNTAPAPWTYDNIAYMKNQLKMLGFGYDWSRELATCTPEYYRWEQKFFTELYKKGLVYKKTSAVNWCPNDQTVLANEQVIDGCCWRCDTKVERKEIPQWFIKITAYADELLNDLDKLDHWPDTVKTMQRNWIGRSEGVEITFNVNDYDNTLTVYTTRPDTFMGCTYLAVAAGHPLAQKAAENNPELAAFIDECRNTKVAEAEMATMEKKGVDTGFKAVHPLTGEEIPVWAANFVLMEYGTGAVMAVPGHDQRDYEFASKYGLNIKPVILAADGSEPDLSQQALTEKGVLFNSGEFNGLDHEAAFNAIADKLTAMGVGERKVNYRLRDWGVSRQRYWGAPIPMVTLEDGTVMPTPDDQLPVILPEDVVMDGITSPIKADPEWAKTTVNGMPALRETDTFDTFMESSWYYARYTCPEYKEGMLDSKAANYWLPVDIYIGGIEHAIMHLLYFRFFHKLMRDAGMVNSDEPAKQLLCQGMVLADAFYYVGENGERNWVSPVDAIVERDEKGRIVKAKDAAGHELVYTGMSKMSKSKNNGIDPQVMVERYGADTVRLFMMFASPADMTLEWQESGVEGANRFLKRVWKLVYEHTAKGDVAALNVDALTEDQKALRRDVHKTIAKVTDDIGRRQTFNTAIAAIMELMNKLAKAPTDGEQDRALMQEALLAVVRMLNPFTPHICFTLWQELKGEGDIDNAPWPVADEKAMVEDSTLVVVQVNGKVRAKITVPVDATEEQVRERAGQKHLVAKYLDGVTVRKVIYVPGKLLNLVVG.

A 'HIGH' region motif is present at residues 42–52 (PYPSGRLHMGH). Positions 619–623 (KMSKS) match the 'KMSKS' region motif. Lys-622 is an ATP binding site.

The protein belongs to the class-I aminoacyl-tRNA synthetase family.

Its subcellular location is the cytoplasm. The enzyme catalyses tRNA(Leu) + L-leucine + ATP = L-leucyl-tRNA(Leu) + AMP + diphosphate. This is Leucine--tRNA ligase from Escherichia coli O6:K15:H31 (strain 536 / UPEC).